Consider the following 1159-residue polypeptide: WASH complex subunit 5 (1159 aa).

Residue S917 is modified to Phosphoserine.

It belongs to the strumpellin family. As to quaternary structure, component of the WASH core complex also described as WASH regulatory complex (SHRC) composed of WASH (WASHC1, WASH2P or WASH3P), WASHC2 (WASHC2A or WASHC2C), WASHC3, WASHC4 and WASHC5. The WASH core complex associates via WASHC2 with the F-actin-capping protein dimer (formed by CAPZA1, CAPZA2 or CAPZA3 and CAPZB) in a transient or substoichiometric manner which was initially described as WASH complex. Interacts with VCP, PI4K2A. As to expression, expressed ubiquitously.

Its subcellular location is the cytoplasm. It localises to the cytosol. It is found in the endoplasmic reticulum. The protein localises to the early endosome. Its function is as follows. Acts as a component of the WASH core complex that functions as a nucleation-promoting factor (NPF) at the surface of endosomes, where it recruits and activates the Arp2/3 complex to induce actin polymerization, playing a key role in the fission of tubules that serve as transport intermediates during endosome sorting. May be involved in axonal outgrowth. Involved in cellular localization of ADRB2. Involved in cellular trafficking of BLOC-1 complex cargos such as ATP7A and VAMP7. The sequence is that of WASH complex subunit 5 from Homo sapiens (Human).